The chain runs to 350 residues: Protein O-mannose kinase (350 aa).

Residue methionine 1 is modified to N-acetylmethionine. Topologically, residues 1 to 20 (MEKQPQNKRRGLAPREVPPA) are cytoplasmic. Residues 21-43 (VGLLLIMALMNTLLYLCLDHFFI) traverse the membrane as a helical; Signal-anchor for type II membrane protein segment. Residues 44 to 350 (APRQSIVDPR…AVMSQAREML (307 aa)) are Lumenal-facing. The 270-residue stretch at 81-350 (VRQLKRVGEG…AVMSQAREML (270 aa)) folds into the Protein kinase domain. Asparagine 165, asparagine 220, and asparagine 235 each carry an N-linked (GlcNAc...) asparagine glycan.

This sequence belongs to the protein kinase superfamily. Ser/Thr protein kinase family. STKL subfamily.

It is found in the endoplasmic reticulum membrane. It carries out the reaction 3-O-[beta-D-GalNAc-(1-&gt;3)-beta-D-GlcNAc-(1-&gt;4)-alpha-D-Man]-L-Thr-[protein] + ATP = 3-O-[beta-D-GalNAc-(1-&gt;3)-beta-D-GlcNAc-(1-&gt;4)-(O-6-P-alpha-D-Man)]-Thr-[protein] + ADP + H(+). Protein O-mannose kinase that specifically mediates phosphorylation at the 6-position of an O-mannose of the trisaccharide (N-acetylgalactosamine (GalNAc)-beta-1,3-N-acetylglucosamine (GlcNAc)-beta-1,4-mannose) to generate phosphorylated O-mannosyl trisaccharide (N-acetylgalactosamine-beta-1,3-N-acetylglucosamine-beta-1,4-(phosphate-6-)mannose). Phosphorylated O-mannosyl trisaccharide is a carbohydrate structure present in alpha-dystroglycan (DAG1), which is required for binding laminin G-like domain-containing extracellular proteins with high affinity. Only shows kinase activity when the GalNAc-beta-3-GlcNAc-beta-terminus is linked to the 4-position of O-mannose, suggesting that this disaccharide serves as the substrate recognition motif. The sequence is that of Protein O-mannose kinase (POMK) from Macaca fascicularis (Crab-eating macaque).